Consider the following 818-residue polypeptide: Sodium/hydrogen exchanger 1 (818 aa).

Over 1-98 (MLLWSGICGL…FPVLGIDYTH (98 aa)) the chain is Extracellular. Residues 39 to 76 (PSPTASTIRGSEPPRERSIGDVTTAPPELAPESRPVNH) are disordered. A glycan (N-linked (GlcNAc...) asparagine) is linked at asparagine 75. Residues 99–121 (VRTPFEISLWILLACLMKIGFHV) traverse the membrane as a helical segment. Residues 122–130 (IPTISSIVP) lie on the Cytoplasmic side of the membrane. The chain crosses the membrane as a helical span at residues 131–148 (ESCLLIVVGLLVGGLIKA). Residues 149-158 (VGETPPFLQS) are Extracellular-facing. A helical membrane pass occupies residues 159–176 (EVFFLFLLPPIILDAGYF). Residues 177-186 (LPLRQFTENL) are Cytoplasmic-facing. A helical transmembrane segment spans residues 187 to 215 (GTILIFAVVGTLWNAFFLGGLMYAVCLVG). Over 216–222 (GEQINNI) the chain is Extracellular. A helical membrane pass occupies residues 223 to 249 (GLLDNLLFGSIISAVDPVAVLAVFEEI). Residues 250–252 (HIN) lie on the Cytoplasmic side of the membrane. The helical transmembrane segment at 253–283 (ELLHILVFGESLLNDAVTVVLYHLFEEFANY) threads the bilayer. Topologically, residues 284–287 (DRVG) are extracellular. The helical transmembrane segment at 288-322 (IVDIVLGFLSFFVVSLGGVFVGVVYGVIAAFTSRF) threads the bilayer. Over 323–328 (TSHIRV) the chain is Cytoplasmic. Residues 329 to 341 (IEPLFVFLYSYMA) form a helical membrane-spanning segment. Over 342–350 (YLSAELFHL) the chain is Extracellular. Residues 351–371 (SGIMALIASGVVMRPYVEANI) form a helical membrane-spanning segment. Residues 372–373 (SH) are Cytoplasmic-facing. A helical membrane pass occupies residues 374–404 (KSHTTIKYFLKMWSSVSETLIFIFLGVSTVA). The Extracellular segment spans residues 405-410 (GSHHWN). The helical transmembrane segment at 411 to 438 (WTFVISTLLFCLIARVLGVLGLTWFINK) threads the bilayer. Residues 439–444 (FRIVKL) lie on the Cytoplasmic side of the membrane. A helical membrane pass occupies residues 445-469 (TPKDQFIIAYGGLRGAIAFSLGHLL). Residues 470–475 (DKNHFP) are Extracellular-facing. Residues 476 to 505 (MCDLFLTAIITVIFFTVFVQGMTIRPLVDL) traverse the membrane as a helical segment. The tract at residues 503–545 (VDLLAVKKKQETKRSINEEIHTQFLDHLLTGIEDICGHYGHHH) is interaction with TESC. Residues 506-818 (LAVKKKQETK…EGEPFIPKGQ (313 aa)) are Cytoplasmic-facing. Residues 509 to 516 (KKKQETKR) form a PI(4,5)P2-binding region region. The interval 515-545 (KRSINEEIHTQFLDHLLTGIEDICGHYGHHH) is interaction with CHP2. The interval 540 to 545 (HYGHHH) is confers pH-dependent PI(4,5)P2 binding. Residues 552–560 (RFNKKYVKK) are PI(4,5)P2-binding region. Residues serine 599 and serine 602 each carry the phosphoserine modification. Residue threonine 603 is modified to Phosphothreonine. Serine 605 and serine 648 each carry phosphoserine. Residues 633-818 (KILRNNLQKT…EGEPFIPKGQ (186 aa)) are interaction with TESC. The segment at 633 to 818 (KILRNNLQKT…EGEPFIPKGQ (186 aa)) is interaction with CALM1. The interval 684–687 (LTVP) is interaction with PPP3CA. Phosphoserine is present on residues serine 693, serine 697, and serine 703. Residues 715-720 (PVITID) form an interaction with PPP3CA region. Serine 723, serine 726, and serine 729 each carry phosphoserine. The tract at residues 739-818 (GKVLGLSREP…EGEPFIPKGQ (80 aa)) is disordered. Phosphothreonine is present on residues threonine 752 and threonine 782. Over residues 785-794 (PSDSPSSQRI) the composition is skewed to polar residues. Phosphoserine is present on residues serine 788, serine 790, and serine 799.

Belongs to the monovalent cation:proton antiporter 1 (CPA1) transporter (TC 2.A.36) family. In terms of assembly, homodimer; dimerization is crucial for its function. Oligomer. Interacts with CALM in a calcium-dependent manner. Interacts with TESC. Interacts (via the juxtamembrane region of the cytoplasmic C-terminal domain) with CHP1; the interaction occurs at the plasma membrane in a calcium-dependent manner. Interacts with CHP2; the interaction occurs in a calcium-dependent manner. Interacts with EZR; regulates the cytoskeletal interactions of SLC9A1 and promotes stress fiber formation. In terms of processing, ubiquitinated, leading to its degradation by the proteasome. Ubiquitination is reduced by CHP1. O-glycosylated. Post-translationally, palmitoylated; may play a major role in SLC9A1 regulation. In terms of processing, phosphorylation at Thr-782 increases SLC9A1 activity. Specifically dephosphorylated at Thr-782 by PPP3CA that negatively regulates SLC9A1 activity. Phosphorylation at Ser-648 by AKT1 reduces SLC9A1 binding to CALM1.

It is found in the cell membrane. The protein localises to the basolateral cell membrane. It catalyses the reaction Na(+)(in) + H(+)(out) = Na(+)(out) + H(+)(in). The catalysed reaction is Li(+)(out) + H(+)(in) = Li(+)(in) + H(+)(out). The enzyme catalyses Li(+)(in) + Na(+)(out) = Li(+)(out) + Na(+)(in). Activated at acidic pHs. Inhibited by cariporide and eniporide. Inhibited by amiloride and 5-amino-substituted derivatives. Phosphatidylinositol 4,5-bisphosphate (PI(4,5)P2) and phosphatidylinositol 3,4,5-trisphosphate (PI(3,4,5)P3) bind and differentially regulate SLC9A1 activity. In terms of biological role, electroneutral Na(+) /H(+) antiporter that extrudes Na(+) in exchange for external protons driven by the inward sodium ion chemical gradient, protecting cells from acidification that occurs from metabolism. Exchanges intracellular H(+) ions for extracellular Na(+) in 1:1 stoichiometry. Plays a key role in maintening intracellular pH neutral and cell volume, and thus is important for cell growth, proliferation, migration and survival. In addition, can transport lithium Li(+) and also functions as a Na(+)/Li(+) antiporter. SLC9A1 also functions in membrane anchoring and organization of scaffolding complexes that coordinate signaling inputs. The sequence is that of Sodium/hydrogen exchanger 1 (SLC9A1) from Sus scrofa (Pig).